The chain runs to 374 residues: F-box/LRR-repeat protein 8 (374 aa).

The F-box domain maps to 2 to 48; the sequence is AEPGEGLPEEVLALIFRHLSLRDRAAAARVCRAWAAAATCSAVWHDT.

Directly interacts with SKP1 and CUL1.

Substrate-recognition component of the SCF (SKP1-CUL1-F-box protein)-type E3 ubiquitin ligase complex. This Homo sapiens (Human) protein is F-box/LRR-repeat protein 8 (FBXL8).